The following is a 249-amino-acid chain: Pyridoxine 5'-phosphate synthase (249 aa).

A 3-amino-2-oxopropyl phosphate-binding site is contributed by asparagine 7. Position 9–10 (9–10) interacts with 1-deoxy-D-xylulose 5-phosphate; it reads DH. Arginine 18 provides a ligand contact to 3-amino-2-oxopropyl phosphate. Histidine 43 (proton acceptor) is an active-site residue. Positions 45 and 50 each coordinate 1-deoxy-D-xylulose 5-phosphate. Glutamate 70 serves as the catalytic Proton acceptor. 1-deoxy-D-xylulose 5-phosphate is bound at residue threonine 100. Histidine 190 acts as the Proton donor in catalysis. Residues glycine 191 and 212-213 each bind 3-amino-2-oxopropyl phosphate; that span reads GH.

It belongs to the PNP synthase family. As to quaternary structure, homooctamer; tetramer of dimers.

The protein resides in the cytoplasm. It catalyses the reaction 3-amino-2-oxopropyl phosphate + 1-deoxy-D-xylulose 5-phosphate = pyridoxine 5'-phosphate + phosphate + 2 H2O + H(+). The protein operates within cofactor biosynthesis; pyridoxine 5'-phosphate biosynthesis; pyridoxine 5'-phosphate from D-erythrose 4-phosphate: step 5/5. Catalyzes the complicated ring closure reaction between the two acyclic compounds 1-deoxy-D-xylulose-5-phosphate (DXP) and 3-amino-2-oxopropyl phosphate (1-amino-acetone-3-phosphate or AAP) to form pyridoxine 5'-phosphate (PNP) and inorganic phosphate. The protein is Pyridoxine 5'-phosphate synthase of Synechococcus sp. (strain CC9311).